Here is a 238-residue protein sequence, read N- to C-terminus: Probable transcriptional regulatory protein SSU98_0387 (238 aa).

Belongs to the TACO1 family. YeeN subfamily.

The protein localises to the cytoplasm. The chain is Probable transcriptional regulatory protein SSU98_0387 from Streptococcus suis (strain 98HAH33).